The primary structure comprises 447 residues: tRNA modification GTPase MnmE (447 aa).

(6S)-5-formyl-5,6,7,8-tetrahydrofolate is bound by residues R24, E81, and K120. Residues 216–371 form the TrmE-type G domain; that stretch reads GLNVVIAGKP…LRKELSDIAG (156 aa). N226 lines the K(+) pocket. Residues 226–231, 245–251, and 270–273 contribute to the GTP site; these read NAGKSS, TDIAGTT, and DTAG. Residue S230 coordinates Mg(2+). K(+) is bound by residues T245, I247, and T250. T251 is a binding site for Mg(2+). (6S)-5-formyl-5,6,7,8-tetrahydrofolate is bound at residue K447.

It belongs to the TRAFAC class TrmE-Era-EngA-EngB-Septin-like GTPase superfamily. TrmE GTPase family. In terms of assembly, homodimer. Heterotetramer of two MnmE and two MnmG subunits. The cofactor is K(+).

The protein resides in the cytoplasm. Functionally, exhibits a very high intrinsic GTPase hydrolysis rate. Involved in the addition of a carboxymethylaminomethyl (cmnm) group at the wobble position (U34) of certain tRNAs, forming tRNA-cmnm(5)s(2)U34. The polypeptide is tRNA modification GTPase MnmE (Ruthia magnifica subsp. Calyptogena magnifica).